We begin with the raw amino-acid sequence, 24 residues long: Humanin-like 12 (24 aa).

This sequence belongs to the humanin family.

The protein localises to the secreted. It localises to the cytoplasm. Functionally, plays a role as a neuroprotective and antiapoptotic factor. The polypeptide is Humanin-like 12 (Homo sapiens (Human)).